Here is a 328-residue protein sequence, read N- to C-terminus: UDP-glucose 4-epimerase (328 aa).

Residues 20–21, 41–46, 57–58, 77–81, serine 123, tyrosine 149, and lysine 153 contribute to the NAD(+) site; these read FV, VRHAVN, DI, and CAARA. Positions 123 and 149 each coordinate substrate. The Proton acceptor role is filled by tyrosine 149. Residues 198–199 and 215–217 each bind substrate; these read GI and SIN.

The protein belongs to the NAD(P)-dependent epimerase/dehydratase family. In terms of assembly, homodimer. The cofactor is NAD(+).

The catalysed reaction is UDP-alpha-D-glucose = UDP-alpha-D-galactose. It participates in bacterial outer membrane biogenesis; LPS O-antigen biosynthesis. In terms of biological role, involved in the metabolism of galactose. Catalyzes the conversion of UDP-galactose (UDP-Gal) to UDP-glucose (UDP-Glc) through a mechanism involving the transient reduction of NAD. The chain is UDP-glucose 4-epimerase (galE) from Vibrio cholerae.